The sequence spans 769 residues: RNA-directed RNA polymerase (769 aa).

The RdRp catalytic domain maps to 463–579 (PIGIGLDASR…FCEKGDFNRI (117 aa)).

Belongs to the tombusviridae RNA polymerase family.

It carries out the reaction RNA(n) + a ribonucleoside 5'-triphosphate = RNA(n+1) + diphosphate. In terms of biological role, probable polymerase. This Dianthus barbatus (Carnation) protein is RNA-directed RNA polymerase.